Reading from the N-terminus, the 318-residue chain is Pseudouridine-5'-phosphate glycosidase 1 (318 aa).

The Proton donor role is filled by glutamate 29. Positions 90 and 110 each coordinate substrate. A Mn(2+)-binding site is contributed by aspartate 142. 144–146 serves as a coordination point for substrate; it reads SAD. The active-site Nucleophile is lysine 163.

The protein belongs to the pseudouridine-5'-phosphate glycosidase family. In terms of assembly, homotrimer. Mn(2+) is required as a cofactor.

The catalysed reaction is D-ribose 5-phosphate + uracil = psi-UMP + H2O. In terms of biological role, catalyzes the reversible cleavage of pseudouridine 5'-phosphate (PsiMP) to ribose 5-phosphate and uracil. Functions biologically in the cleavage direction, as part of a pseudouridine degradation pathway. This Photorhabdus laumondii subsp. laumondii (strain DSM 15139 / CIP 105565 / TT01) (Photorhabdus luminescens subsp. laumondii) protein is Pseudouridine-5'-phosphate glycosidase 1.